The primary structure comprises 212 residues: MARKRKSRNNSKIGHGAISRIGRPNNPFEPCRNRYAQKYLTLALMGGAAFFVLKGCSDSSDVDNDGDGTFYATVQDCIDDGNNADICARGWNNAKTAFYADVPKNMTQQNCQSKYENCYYDNVEQSWIPVVSGFLLSRVIRKDRDEPFVYNSGGSSFASRPVWRSTSGDYSWRSGSGKKESYSSGGFTTKKASTVSRGGYGRSSSARGHWGG.

Disordered stretches follow at residues 1–25 (MARKRKSRNNSKIGHGAISRIGRPN) and 165–212 (STSG…HWGG). A compositionally biased stretch (low complexity) spans 202-212 (RSSSARGHWGG).

This is an uncharacterized protein from Escherichia coli (strain K12).